A 357-amino-acid polypeptide reads, in one-letter code: Peptide chain release factor 1 (357 aa).

Gln234 bears the N5-methylglutamine mark. The tract at residues 283-313 (SKKQEQRSSNRKQQVGSGDRSERIRTYNFPQ) is disordered.

The protein belongs to the prokaryotic/mitochondrial release factor family. Methylated by PrmC. Methylation increases the termination efficiency of RF1.

It is found in the cytoplasm. In terms of biological role, peptide chain release factor 1 directs the termination of translation in response to the peptide chain termination codons UAG and UAA. In Borrelia garinii subsp. bavariensis (strain ATCC BAA-2496 / DSM 23469 / PBi) (Borreliella bavariensis), this protein is Peptide chain release factor 1.